A 277-amino-acid polypeptide reads, in one-letter code: MKRFTVLILAIFVAASTVEADVRFSLSGSSSTSYSKFIGDLRKALPSNGTVYNITLLLSSASGASRYTLMTLSNYDGKAITVAVDVTNVYIMGYLVNSTSYFFNESDAKLASQYVFKGSTIVTLPYSGNYEKLQTAAGKIREKIPLGFPALDSAITTLFHYDSTAAAAAFLVIIQTTAEASRFKYIEGQIIERISKNQVPSLATISLENEWSALSKQIQLAQTNNGTFKTPVVITDDKGQRVEITNVTSKVVTKNIQLLLNYKQNVAAFDEDVSAKH.

Residues 1–19 (MKRFTVLILAIFVAASTVE) form the signal peptide. Residue Glu-179 is part of the active site.

The protein belongs to the ribosome-inactivating protein family. Type 1 RIP subfamily.

The catalysed reaction is Endohydrolysis of the N-glycosidic bond at one specific adenosine on the 28S rRNA.. The protein is Ribosome-inactivating protein luffin-alpha of Luffa aegyptiaca (Sponge gourd).